The chain runs to 398 residues: tRNA-specific 2-thiouridylase MnmA (398 aa).

ATP is bound by residues 19–26 (AMSGGVDS) and Leu45. Cys113 serves as the catalytic Nucleophile. The cysteines at positions 113 and 210 are disulfide-linked. Gly137 is a binding site for ATP. The interval 160–162 (RDQ) is interaction with tRNA. Cys210 serves as the catalytic Cysteine persulfide intermediate.

This sequence belongs to the MnmA/TRMU family.

It localises to the cytoplasm. The catalysed reaction is S-sulfanyl-L-cysteinyl-[protein] + uridine(34) in tRNA + AH2 + ATP = 2-thiouridine(34) in tRNA + L-cysteinyl-[protein] + A + AMP + diphosphate + H(+). Catalyzes the 2-thiolation of uridine at the wobble position (U34) of tRNA, leading to the formation of s(2)U34. The protein is tRNA-specific 2-thiouridylase MnmA of Rhodopseudomonas palustris (strain HaA2).